Consider the following 246-residue polypeptide: NAD(P)H-quinone oxidoreductase subunit K (246 aa).

Residues cysteine 62, cysteine 63, cysteine 127, and cysteine 158 each contribute to the [4Fe-4S] cluster site.

The protein belongs to the complex I 20 kDa subunit family. As to quaternary structure, NDH-1 can be composed of about 15 different subunits; different subcomplexes with different compositions have been identified which probably have different functions. [4Fe-4S] cluster is required as a cofactor.

Its subcellular location is the cellular thylakoid membrane. It catalyses the reaction a plastoquinone + NADH + (n+1) H(+)(in) = a plastoquinol + NAD(+) + n H(+)(out). It carries out the reaction a plastoquinone + NADPH + (n+1) H(+)(in) = a plastoquinol + NADP(+) + n H(+)(out). NDH-1 shuttles electrons from an unknown electron donor, via FMN and iron-sulfur (Fe-S) centers, to quinones in the respiratory and/or the photosynthetic chain. The immediate electron acceptor for the enzyme in this species is believed to be plastoquinone. Couples the redox reaction to proton translocation, and thus conserves the redox energy in a proton gradient. Cyanobacterial NDH-1 also plays a role in inorganic carbon-concentration. The chain is NAD(P)H-quinone oxidoreductase subunit K from Parasynechococcus marenigrum (strain WH8102).